We begin with the raw amino-acid sequence, 498 residues long: Protein disulfide-isomerase (498 aa).

A signal peptide spans 1 to 23; sequence MASFRGSIWYCIFVLSLIAVAIS. Thioredoxin domains follow at residues 24–143 and 339–484; these read AAES…KQSG and YLKA…KNRD. Residue asparagine 41 is glycosylated (N-linked (GlcNAc...) asparagine). Residues cysteine 61, cysteine 64, cysteine 406, and cysteine 409 each act as nucleophile in the active site. 2 disulfide bridges follow: cysteine 61–cysteine 64 and cysteine 406–cysteine 409. The short motif at 495 to 498 is the Prevents secretion from ER element; sequence KDEL.

This sequence belongs to the protein disulfide isomerase family.

The protein localises to the endoplasmic reticulum lumen. The enzyme catalyses Catalyzes the rearrangement of -S-S- bonds in proteins.. In terms of biological role, participates in the folding of proteins containing disulfide bonds, may be involved in glycosylation, prolyl hydroxylation and triglyceride transfer. This chain is Protein disulfide-isomerase, found in Ricinus communis (Castor bean).